The sequence spans 334 residues: Acryloyl-coenzyme A reductase (334 aa).

Zn(2+) is bound at residue C38. Y39 serves as a coordination point for NADP(+). Positions 60, 90, 93, 96, 104, and 146 each coordinate Zn(2+). Residues 173–176 and 195–197 each bind NADP(+); these read SGGV and TTS.

This sequence belongs to the zinc-containing alcohol dehydrogenase family. Monomer. The cofactor is Zn(2+).

The enzyme catalyses propanoyl-CoA + NADP(+) = acryloyl-CoA + NADPH + H(+). In terms of biological role, plays a role in autotrophic carbon fixation via the 3-hydroxypropionate/4-hydroxybutyrate cycle. Catalyzes the acryloyl-CoA dependent NADPH oxidation and formation of propionyl-CoA. Inactive towards 3-hydroxypropionyl-CoA, NADH and crotonyl-CoA. This is Acryloyl-coenzyme A reductase from Sulfurisphaera tokodaii (strain DSM 16993 / JCM 10545 / NBRC 100140 / 7) (Sulfolobus tokodaii).